Here is a 412-residue protein sequence, read N- to C-terminus: Eukaryotic initiation factor 4A-1 (412 aa).

Ala2 carries the N-acetylalanine modification. The Q motif signature appears at 39–67 (ESFDAMGLQENLLRGIYAYGFEKPSAIQQ). Positions 70-240 (IVPFCKGLDV…RKFMSKPVRI (171 aa)) constitute a Helicase ATP-binding domain. 83–90 (AQSGTGKT) provides a ligand contact to ATP. Ser104 carries the phosphoserine modification. The residue at position 145 (Thr145) is a Phosphothreonine. A DEAD box motif is present at residues 188-191 (DEAD). The region spanning 251-412 (GIKQFYVNVE…ELPSNVADLL (162 aa)) is the Helicase C-terminal domain.

Belongs to the DEAD box helicase family. eIF4A subfamily. EIF4F is a multi-subunit complex, the composition of which varies with external and internal environmental conditions. It is composed of at least EIF4A, EIF4E and EIF4G. Interacts with CDKA-1. Interacts with MRF1, MRF2, MRF3/ECIP1 and MRF4. In terms of tissue distribution, highly expressed in the whole plant.

It localises to the cytoplasm. The catalysed reaction is ATP + H2O = ADP + phosphate + H(+). ATP-dependent RNA helicase which is a subunit of the eIF4F complex involved in cap recognition and is required for mRNA binding to ribosome. In the current model of translation initiation, eIF4A unwinds RNA secondary structures in the 5'-UTR of mRNAs which is necessary to allow efficient binding of the small ribosomal subunit, and subsequent scanning for the initiator codon. This is Eukaryotic initiation factor 4A-1 from Arabidopsis thaliana (Mouse-ear cress).